We begin with the raw amino-acid sequence, 346 residues long: 3-isopropylmalate dehydrogenase (346 aa).

76-87 (GPKWTDPNNRPE) lines the NAD(+) pocket. Arg94, Arg104, Arg132, and Asp217 together coordinate substrate. The Mg(2+) site is built by Asp217, Asp241, and Asp245. 275–287 (GSAPDIANQDIAN) serves as a coordination point for NAD(+).

This sequence belongs to the isocitrate and isopropylmalate dehydrogenases family. LeuB type 1 subfamily. In terms of assembly, homodimer. Mg(2+) serves as cofactor. Requires Mn(2+) as cofactor.

The protein resides in the cytoplasm. The catalysed reaction is (2R,3S)-3-isopropylmalate + NAD(+) = 4-methyl-2-oxopentanoate + CO2 + NADH. It participates in amino-acid biosynthesis; L-leucine biosynthesis; L-leucine from 3-methyl-2-oxobutanoate: step 3/4. Its function is as follows. Catalyzes the oxidation of 3-carboxy-2-hydroxy-4-methylpentanoate (3-isopropylmalate) to 3-carboxy-4-methyl-2-oxopentanoate. The product decarboxylates to 4-methyl-2 oxopentanoate. This is 3-isopropylmalate dehydrogenase from Staphylococcus saprophyticus subsp. saprophyticus (strain ATCC 15305 / DSM 20229 / NCIMB 8711 / NCTC 7292 / S-41).